The sequence spans 406 residues: MAMSEQPQPVAGAAASTTKARTSFGILGAISLSHLLNDMIQSLILAIYPLLQSEFSLTFMQIGMITLTFQLASSLLQPVVGYWTDKYPMPWSLPIGMCFTLSGLVLLALAGSFGAVLLAAALVGTGSSVFHPESSRVARMASGGRHGLAQSIFQVGGNFGSSLGPLLAAVIIAPYGKGNVAWFVLAALLAIVVLAQISRWYSAQHRMNKGKPKATIINPLPRNKVVLAVSILLILIFSKYFYMASISSYYTFYLMQKFGLSIQNAQLHLFAFLFAVAAGTVIGGPVGDKIGRKYVIWGSILGVAPFTLILPYASLHWTGVLTVIIGFILASAFSAILVYAQELLPGRIGMVSGLFFGFAFGMGGLGAAVLGLIADHTSIELVYKICAFLPLLGMLTIFLPDNRHKD.

Residues 1 to 42 (MAMSEQPQPVAGAAASTTKARTSFGILGAISLSHLLNDMIQS) lie on the Periplasmic side of the membrane. 2 helical membrane-spanning segments follow: residues 43–63 (LILA…MQIG) and 64–84 (MITL…GYWT). The Periplasmic segment spans residues 85–102 (DKYPMPWSLPIGMCFTLS). Residues 103 to 123 (GLVLLALAGSFGAVLLAAALV) traverse the membrane as a helical segment. The Cytoplasmic portion of the chain corresponds to 124 to 151 (GTGSSVFHPESSRVARMASGGRHGLAQS). The chain crosses the membrane as a helical span at residues 152–172 (IFQVGGNFGSSLGPLLAAVII). Residues 173–177 (APYGK) lie on the Periplasmic side of the membrane. Residues 178–198 (GNVAWFVLAALLAIVVLAQIS) traverse the membrane as a helical segment. The Cytoplasmic portion of the chain corresponds to 199–225 (RWYSAQHRMNKGKPKATIINPLPRNKV). A helical membrane pass occupies residues 226-246 (VLAVSILLILIFSKYFYMASI). At 247–266 (SSYYTFYLMQKFGLSIQNAQ) the chain is on the periplasmic side. The helical transmembrane segment at 267-287 (LHLFAFLFAVAAGTVIGGPVG) threads the bilayer. The Cytoplasmic segment spans residues 288–294 (DKIGRKY). Residues 295-315 (VIWGSILGVAPFTLILPYASL) form a helical membrane-spanning segment. Residues 316–319 (HWTG) lie on the Periplasmic side of the membrane. Residues 320–340 (VLTVIIGFILASAFSAILVYA) traverse the membrane as a helical segment. Residues 341-353 (QELLPGRIGMVSG) are Cytoplasmic-facing. The chain crosses the membrane as a helical span at residues 354 to 374 (LFFGFAFGMGGLGAAVLGLIA). At 375–378 (DHTS) the chain is on the periplasmic side. A helical transmembrane segment spans residues 379-399 (IELVYKICAFLPLLGMLTIFL). The Cytoplasmic portion of the chain corresponds to 400 to 406 (PDNRHKD).

This sequence belongs to the major facilitator superfamily.

The protein resides in the cell inner membrane. Confers the resistance against fosmidomycin. The polypeptide is Fosmidomycin resistance protein (fsr) (Escherichia coli (strain K12)).